Reading from the N-terminus, the 476-residue chain is Sulfate adenylyltransferase subunit 1 (476 aa).

The 218-residue stretch at Lys24 to Glu241 folds into the tr-type G domain. A G1 region spans residues Gly33–Ser40. Residue Gly33–Ser40 coordinates GTP. The tract at residues Gly91–Asp95 is G2. The tract at residues Asp112–Gly115 is G3. Residues Asp112–His116 and Asn167–Asp170 each bind GTP. Positions Asn167–Asp170 are G4. Positions Ser205 to Leu207 are G5.

This sequence belongs to the TRAFAC class translation factor GTPase superfamily. Classic translation factor GTPase family. CysN/NodQ subfamily. Heterodimer composed of CysD, the smaller subunit, and CysN.

It carries out the reaction sulfate + ATP + H(+) = adenosine 5'-phosphosulfate + diphosphate. It functions in the pathway sulfur metabolism; hydrogen sulfide biosynthesis; sulfite from sulfate: step 1/3. In terms of biological role, with CysD forms the ATP sulfurylase (ATPS) that catalyzes the adenylation of sulfate producing adenosine 5'-phosphosulfate (APS) and diphosphate, the first enzymatic step in sulfur assimilation pathway. APS synthesis involves the formation of a high-energy phosphoric-sulfuric acid anhydride bond driven by GTP hydrolysis by CysN coupled to ATP hydrolysis by CysD. The sequence is that of Sulfate adenylyltransferase subunit 1 from Photobacterium profundum (strain SS9).